The primary structure comprises 395 residues: Carbohydrate sulfotransferase 5 (395 aa).

Residues Met1 to Ser7 lie on the Cytoplasmic side of the membrane. Residues Ser8–Val26 form a helical; Signal-anchor for type II membrane protein membrane-spanning segment. The Lumenal portion of the chain corresponds to Ser27–Ser395. Trp49 to Phe55 serves as a coordination point for 3'-phosphoadenylyl sulfate. 2 N-linked (GlcNAc...) asparagine glycosylation sites follow: Asn116 and Asn142. Arg202 to Ser210 provides a ligand contact to 3'-phosphoadenylyl sulfate. Residues Asn229 and Asn305 are each glycosylated (N-linked (GlcNAc...) asparagine).

It belongs to the sulfotransferase 1 family. Gal/GlcNAc/GalNAc subfamily. In terms of tissue distribution, expressed in cornea.

Its subcellular location is the golgi apparatus membrane. Functionally, sulfotransferase that utilizes 3'-phospho-5'-adenylyl sulfate (PAPS) as sulfonate donor to catalyze the transfer of sulfate to position 6 of non-reducing N-acetylglucosamine (GlcNAc) residues of keratan. Mediates sulfation of keratan in cornea. Keratan sulfate plays a central role in maintaining corneal transparency. Acts on the non-reducing terminal GlcNAc of short and long carbohydrate substrates that have poly-N-acetyllactosamine structures. May also have activity toward O-linked sugars of mucin-type acceptors. This chain is Carbohydrate sulfotransferase 5 (Chst5), found in Mus musculus (Mouse).